A 216-amino-acid polypeptide reads, in one-letter code: Sperm microtubule inner protein 8 (216 aa).

In terms of assembly, microtubule inner protein component of sperm flagellar doublet microtubules.

Its subcellular location is the cytoplasm. The protein localises to the cytoskeleton. The protein resides in the flagellum axoneme. In terms of biological role, microtubule inner protein (MIP) part of the dynein-decorated doublet microtubules (DMTs) in flagellum axoneme. May serve to reinforce and thus stabilize the microtubule structure in the sperm flagella. This Rattus norvegicus (Rat) protein is Sperm microtubule inner protein 8 (Spmip8).